Reading from the N-terminus, the 268-residue chain is Tryptophan synthase alpha chain (268 aa).

Residues E49 and D60 each act as proton acceptor in the active site.

It belongs to the TrpA family. Tetramer of two alpha and two beta chains.

The enzyme catalyses (1S,2R)-1-C-(indol-3-yl)glycerol 3-phosphate + L-serine = D-glyceraldehyde 3-phosphate + L-tryptophan + H2O. Its pathway is amino-acid biosynthesis; L-tryptophan biosynthesis; L-tryptophan from chorismate: step 5/5. Its function is as follows. The alpha subunit is responsible for the aldol cleavage of indoleglycerol phosphate to indole and glyceraldehyde 3-phosphate. This is Tryptophan synthase alpha chain from Xylella fastidiosa (strain M23).